We begin with the raw amino-acid sequence, 382 residues long: Pregnancy-associated glycoprotein 1 (382 aa).

A signal peptide spans 1–15 (MKWLVLLGLVAFSEC). Positions 16–53 (IVKIPLRRVKTMRNTLSGKKMLNSFLKEHAYRLSQISF) are cleaved as a propeptide — activation peptide. Asparagine 57 and asparagine 74 each carry an N-linked (GlcNAc...) asparagine glycan. A Peptidase A1 domain is found at 71 to 379 (YVGNITIGTP…DRGNDRIGLA (309 aa)). Cysteines 102 and 110 form a disulfide. An N-linked (GlcNAc...) asparagine glycan is attached at asparagine 128. Cystine bridges form between cysteine 263–cysteine 267 and cysteine 305–cysteine 339.

Belongs to the peptidase A1 family. Trophoblast and placental tissue. Produced specifically in the invasive binucleate cells of the placenta.

Its subcellular location is the secreted. The protein localises to the extracellular space. Has no proteolytic activity. The polypeptide is Pregnancy-associated glycoprotein 1 (Ovis aries (Sheep)).